The chain runs to 109 residues: Prothymosin alpha (109 aa).

Residues 1–109 (MSDTSVDASV…AKKQKTDDDD (109 aa)) form a disordered region. Residues 9–35 (SVEKTTKDLKSKDKELVEETENGKDKP) show a composition bias toward basic and acidic residues. Over residues 41-81 (ENEENGEDGADNEEEEEVDEEDEEDEGEGDDDEGDEDDEAD) the composition is skewed to acidic residues. Positions 99–109 (DAKKQKTDDDD) are enriched in basic and acidic residues.

It belongs to the pro/parathymosin family. Highly expressed in the testis.

The protein resides in the nucleus. Functionally, may have role in testicular activity. This Pelophylax lessonae (Pool frog) protein is Prothymosin alpha.